Reading from the N-terminus, the 60-residue chain is Large ribosomal subunit protein uL30 (60 aa).

This sequence belongs to the universal ribosomal protein uL30 family. As to quaternary structure, part of the 50S ribosomal subunit.

This chain is Large ribosomal subunit protein uL30, found in Sphingopyxis alaskensis (strain DSM 13593 / LMG 18877 / RB2256) (Sphingomonas alaskensis).